A 309-amino-acid chain; its full sequence is Homoserine kinase (309 aa).

ATP is bound at residue 91–101 (PIGSGLGSSAC).

This sequence belongs to the GHMP kinase family. Homoserine kinase subfamily.

It localises to the cytoplasm. The enzyme catalyses L-homoserine + ATP = O-phospho-L-homoserine + ADP + H(+). It participates in amino-acid biosynthesis; L-threonine biosynthesis; L-threonine from L-aspartate: step 4/5. Functionally, catalyzes the ATP-dependent phosphorylation of L-homoserine to L-homoserine phosphate. The protein is Homoserine kinase of Erwinia tasmaniensis (strain DSM 17950 / CFBP 7177 / CIP 109463 / NCPPB 4357 / Et1/99).